A 122-amino-acid polypeptide reads, in one-letter code: Large ribosomal subunit protein uL14 (122 aa).

Belongs to the universal ribosomal protein uL14 family. In terms of assembly, part of the 50S ribosomal subunit. Forms a cluster with proteins L3 and L19. In the 70S ribosome, L14 and L19 interact and together make contacts with the 16S rRNA in bridges B5 and B8.

Functionally, binds to 23S rRNA. Forms part of two intersubunit bridges in the 70S ribosome. The chain is Large ribosomal subunit protein uL14 from Pseudomonas paraeruginosa (strain DSM 24068 / PA7) (Pseudomonas aeruginosa (strain PA7)).